A 476-amino-acid chain; its full sequence is Glycogen synthase (476 aa).

Position 15 (Lys15) interacts with ADP-alpha-D-glucose.

Belongs to the glycosyltransferase 1 family. Bacterial/plant glycogen synthase subfamily.

It catalyses the reaction [(1-&gt;4)-alpha-D-glucosyl](n) + ADP-alpha-D-glucose = [(1-&gt;4)-alpha-D-glucosyl](n+1) + ADP + H(+). Its pathway is glycan biosynthesis; glycogen biosynthesis. Its function is as follows. Synthesizes alpha-1,4-glucan chains using ADP-glucose. This is Glycogen synthase from Marinomonas sp. (strain MWYL1).